A 396-amino-acid polypeptide reads, in one-letter code: Stearoyl-[acyl-carrier-protein] 9-desaturase, chloroplastic (396 aa).

The N-terminal 33 residues, 1-33, are a transit peptide targeting the chloroplast; that stretch reads MAIRINTATFQSDLYRSFAFPQPKPLRSPKFAM. Fe cation-binding residues include Glu138, Glu176, His179, Glu229, Glu262, and His265.

Belongs to the fatty acid desaturase type 2 family. In terms of assembly, homodimer. The cofactor is Fe(2+).

It localises to the plastid. It is found in the chloroplast. It catalyses the reaction octadecanoyl-[ACP] + 2 reduced [2Fe-2S]-[ferredoxin] + O2 + 2 H(+) = (9Z)-octadecenoyl-[ACP] + 2 oxidized [2Fe-2S]-[ferredoxin] + 2 H2O. It functions in the pathway lipid metabolism; fatty acid metabolism. Functionally, converts stearoyl-ACP to oleoyl-ACP by introduction of a cis double bond between carbons 9 and 10 of the acyl chain. The polypeptide is Stearoyl-[acyl-carrier-protein] 9-desaturase, chloroplastic (Helianthus annuus (Common sunflower)).